A 200-amino-acid chain; its full sequence is Elongation factor Ts (200 aa).

The involved in Mg(2+) ion dislocation from EF-Tu stretch occupies residues 82-85 (TDFV).

This sequence belongs to the EF-Ts family.

It localises to the cytoplasm. Functionally, associates with the EF-Tu.GDP complex and induces the exchange of GDP to GTP. It remains bound to the aminoacyl-tRNA.EF-Tu.GTP complex up to the GTP hydrolysis stage on the ribosome. This is Elongation factor Ts from Solidesulfovibrio magneticus (strain ATCC 700980 / DSM 13731 / RS-1) (Desulfovibrio magneticus).